The chain runs to 700 residues: Myb-related protein B (700 aa).

HTH myb-type domains lie at 26–77 (RDSK…LRVL), 78–133 (NPDL…NPEV), and 134–184 (KKSC…KRKV). The H-T-H motif DNA-binding region spans 54–77 (WKFLASHFPNRTDQQCQYRWLRVL). Residue Lys-104 forms a Glycyl lysine isopeptide (Lys-Gly) (interchain with G-Cter in SUMO2) linkage. 2 consecutive DNA-binding regions (H-T-H motif) follow at residues 106 to 129 (WTLIAKHLKGRLGKQCRERWHNHL) and 157 to 180 (WAEIAKMLPGRTDNAVKNHWNSTI). Residues Lys-194 and Lys-197 each participate in a glycyl lysine isopeptide (Lys-Gly) (interchain with G-Cter in SUMO2) cross-link. Disordered stretches follow at residues 212 to 287 (LQSA…PETS) and 391 to 412 (PISPSTEVGGSGIGTPPSVLKR). The segment covering 213–229 (QSAQPTEGQGSLLTNWP) has biased composition (polar residues). Ser-241 carries the phosphoserine modification. A Phosphothreonine modification is found at Thr-266. Lys-275 is covalently cross-linked (Glycyl lysine isopeptide (Lys-Gly) (interchain with G-Cter in SUMO2)). Phosphoserine occurs at positions 282 and 393. Residue Lys-411 forms a Glycyl lysine isopeptide (Lys-Gly) (interchain with G-Cter in SUMO2) linkage. A Nuclear localization signal motif is present at residues 411-417 (KRQRKRR). Thr-440 and Thr-444 each carry phosphothreonine; by CDK2. Glycyl lysine isopeptide (Lys-Gly) (interchain with G-Cter in SUMO2) cross-links involve residues Lys-447 and Lys-482. 2 positions are modified to phosphothreonine; by CDK2: Thr-487 and Thr-494. A Glycyl lysine isopeptide (Lys-Gly) (interchain with G-Cter in SUMO2) cross-link involves residue Lys-499. Thr-505 bears the Phosphothreonine mark. Residue Lys-509 forms a Glycyl lysine isopeptide (Lys-Gly) (interchain with G-Cter in SUMO2) linkage. Thr-520 is subject to Phosphothreonine; by CDK2. Residues Lys-523, Lys-533, and Lys-546 each participate in a glycyl lysine isopeptide (Lys-Gly) (interchain with G-Cter in SUMO2) cross-link. The short motif at 564–584 (RPEKQKRKPGLRRSPIKKVRK) is the Bipartite nuclear localization signal element. Ser-577 is modified (phosphoserine; by CDK2). Residues Lys-584, Lys-596, Lys-625, Lys-639, and Lys-648 each participate in a glycyl lysine isopeptide (Lys-Gly) (interchain with G-Cter in SUMO2) cross-link.

As to quaternary structure, component of the DREAM complex (also named LINC complex) at least composed of E2F4, E2F5, LIN9, LIN37, LIN52, LIN54, MYBL1, MYBL2, RBL1, RBL2, RBBP4, TFDP1 and TFDP2. The complex exists in quiescent cells where it represses cell cycle-dependent genes. It dissociates in S phase when LIN9, LIN37, LIN52 and LIN54 form a subcomplex that binds to MYBL22. Interacts with CCNF (via the Cyclin N-terminal domain). Post-translationally, phosphorylated by cyclin A/CDK2 during S-phase. Phosphorylation at Thr-520 is probably involved in transcriptional activity.

Its subcellular location is the nucleus. Functionally, transcription factor involved in the regulation of cell survival, proliferation, and differentiation. Transactivates the expression of the CLU gene. This is Myb-related protein B (MYBL2) from Homo sapiens (Human).